The chain runs to 152 residues: Putative NrdI-like protein (152 aa).

This sequence belongs to the NrdI family.

This is Putative NrdI-like protein from Streptococcus pyogenes serotype M18 (strain MGAS8232).